Here is a 193-residue protein sequence, read N- to C-terminus: MAVPASPQHPRGYGILLLTLLLKALATTASACNHLRPQDATFSHDSLQLLRDMAPTLPQLCPQHNASCSFNDTILDTSNTRQADKTTHDILQHLFKILSSPSTPAHWNDSQRQSLLNRIHRYTQHLEQCLDSSDTRSRTRWPRNLHLTIKKHFSCLHTFLQDNDYSACAWEHVRLQARAWFLHIHNLTGNTRT.

Residues 1-31 form the signal peptide; that stretch reads MAVPASPQHPRGYGILLLTLLLKALATTASA. 3 disulfide bridges follow: cysteine 32/cysteine 129, cysteine 61/cysteine 155, and cysteine 68/cysteine 168. Asparagine 65, asparagine 71, asparagine 108, and asparagine 186 each carry an N-linked (GlcNAc...) asparagine glycan.

The protein belongs to the alpha/beta interferon family.

It is found in the secreted. Has antiviral activities. The chain is Interferon type A1/A2 (IFNA1) from Gallus gallus (Chicken).